Consider the following 415-residue polypeptide: Tyrosine--tRNA ligase (415 aa).

Tyr33 contributes to the L-tyrosine binding site. Residues Pro38 to Asn47 carry the 'HIGH' region motif. The L-tyrosine site is built by Tyr161 and Gln165. Residues Lys225–Ser229 carry the 'KMSKS' region motif. Lys228 provides a ligand contact to ATP. Positions Met350 to Lys414 constitute an S4 RNA-binding domain.

The protein belongs to the class-I aminoacyl-tRNA synthetase family. TyrS type 1 subfamily. Homodimer.

It is found in the cytoplasm. It catalyses the reaction tRNA(Tyr) + L-tyrosine + ATP = L-tyrosyl-tRNA(Tyr) + AMP + diphosphate + H(+). In terms of biological role, catalyzes the attachment of tyrosine to tRNA(Tyr) in a two-step reaction: tyrosine is first activated by ATP to form Tyr-AMP and then transferred to the acceptor end of tRNA(Tyr). In Mycoplasmoides gallisepticum (strain R(low / passage 15 / clone 2)) (Mycoplasma gallisepticum), this protein is Tyrosine--tRNA ligase.